Consider the following 312-residue polypeptide: Putative S-adenosyl-L-methionine-dependent methyltransferase Mjls_0078 (312 aa).

S-adenosyl-L-methionine is bound by residues Asp134 and 163-164 (DL).

This sequence belongs to the UPF0677 family.

Exhibits S-adenosyl-L-methionine-dependent methyltransferase activity. This Mycobacterium sp. (strain JLS) protein is Putative S-adenosyl-L-methionine-dependent methyltransferase Mjls_0078.